The primary structure comprises 156 residues: SsrA-binding protein (156 aa).

Belongs to the SmpB family.

It localises to the cytoplasm. In terms of biological role, required for rescue of stalled ribosomes mediated by trans-translation. Binds to transfer-messenger RNA (tmRNA), required for stable association of tmRNA with ribosomes. tmRNA and SmpB together mimic tRNA shape, replacing the anticodon stem-loop with SmpB. tmRNA is encoded by the ssrA gene; the 2 termini fold to resemble tRNA(Ala) and it encodes a 'tag peptide', a short internal open reading frame. During trans-translation Ala-aminoacylated tmRNA acts like a tRNA, entering the A-site of stalled ribosomes, displacing the stalled mRNA. The ribosome then switches to translate the ORF on the tmRNA; the nascent peptide is terminated with the 'tag peptide' encoded by the tmRNA and targeted for degradation. The ribosome is freed to recommence translation, which seems to be the essential function of trans-translation. The sequence is that of SsrA-binding protein from Clostridium tetani (strain Massachusetts / E88).